A 144-amino-acid polypeptide reads, in one-letter code: Bombinins BLP-7/GH-2 (144 aa).

An N-terminal signal peptide occupies residues 1 to 18; it reads MNFKYIVAVSFLIASTYA. Positions 19 to 43 are excised as a propeptide; it reads RSVKNDEQSLSQRDVLEEESLREIR. Asn-70 bears the Asparagine amide mark. Positions 74–123 are excised as a propeptide; sequence TAEEHEVMKRLEAVMRDLDSLDYPEEASEMETRSFNQEEIANLFTKKEKR. Position 143 is an isoleucine amide (Ile-143).

It belongs to the bombinin family. Expressed by the skin glands.

The protein resides in the secreted. Functionally, antimicrobial peptide with activity against Gram-positive and -negative bacteria and fungi. Shows activity against P.acnes (MIC=5 uM), E.coli (MIC=5-6.3 uM), S.aureus (MIC=5-6.3 uM), M.luteus, S.cerevisiae and C.albicans (MIC=10-12.5 uM). Also reduces the production of interleukin (IL)-8 and granulocyte-macrophage colony stimulating factor (CSF2) in normal human epidermal keratinocytes (NHEKs). Shows anticancer activity against three human hepatoma cell lines. In vivo, using the rat ear edema model, suppress P.acnes-induced skin inflammation, significantly reducing the ear thickness. Shows weak hemolytic activity against human erythrocytes. Shows weak antimicrobial activity but high hemolytic activity. The protein is Bombinins BLP-7/GH-2 of Bombina orientalis (Oriental fire-bellied toad).